The primary structure comprises 364 residues: Protein-glutamate methylesterase/protein-glutamine glutaminase 3 (364 aa).

The region spanning 7–124 (RVLIVDDSAS…THALLEASAR (118 aa)) is the Response regulatory domain. D58 bears the 4-aspartylphosphate mark. Positions 167-358 (PTTERLVCIG…REIMLWQDAK (192 aa)) constitute a CheB-type methylesterase domain. Active-site residues include S178, H204, and D300.

This sequence belongs to the CheB family. In terms of processing, phosphorylated by CheA. Phosphorylation of the N-terminal regulatory domain activates the methylesterase activity.

Its subcellular location is the cytoplasm. The enzyme catalyses [protein]-L-glutamate 5-O-methyl ester + H2O = L-glutamyl-[protein] + methanol + H(+). It catalyses the reaction L-glutaminyl-[protein] + H2O = L-glutamyl-[protein] + NH4(+). Its function is as follows. Involved in chemotaxis. Part of a chemotaxis signal transduction system that modulates chemotaxis in response to various stimuli. Catalyzes the demethylation of specific methylglutamate residues introduced into the chemoreceptors (methyl-accepting chemotaxis proteins or MCP) by CheR. Also mediates the irreversible deamidation of specific glutamine residues to glutamic acid. In Rhodopseudomonas palustris (strain BisB18), this protein is Protein-glutamate methylesterase/protein-glutamine glutaminase 3.